An 827-amino-acid chain; its full sequence is SH3-containing GRB2-like protein 3-interacting protein 1 (827 aa).

3 disordered regions span residues 1-115, 142-205, and 223-278; these read MMEG…ESHK, SIGN…GPPL, and IWGS…QAAT. 2 stretches are compositionally biased toward basic and acidic residues: residues 16–32 and 40–54; these read RKKE…DRDG and PPYH…EGGK. Phosphoserine is present on residues Ser-78, Ser-104, Ser-105, Ser-107, Ser-149, Ser-151, Ser-156, and Ser-169. Thr-180 and Thr-182 each carry phosphothreonine. Ser-236 is modified (phosphoserine). The span at 245–260 shows a compositional bias: pro residues; sequence TGTPPPLPPKAVPATP. Residues Thr-247 and Thr-259 each carry the phosphothreonine modification. Phosphoserine is present on residues Ser-265, Ser-287, Ser-289, Ser-300, Ser-316, and Ser-319. Residues 265-276 show a composition bias toward polar residues; sequence SPLTVATGNDQA. Residues 314-333 show a composition bias toward basic and acidic residues; that stretch reads HFSDASPEHVTPELTPREKV. The disordered stretch occupies residues 314–523; that stretch reads HFSDASPEHV…LSAATTPTVE (210 aa). 3 positions are modified to phosphothreonine: Thr-324, Thr-328, and Thr-335. Low complexity predominate over residues 336-345; sequence PPAASDIPAD. Pro residues predominate over residues 346–369; that stretch reads SPAPGPPGPPGSAGPPGPPGPRHV. Ser-371 carries the phosphoserine modification. Basic and acidic residues predominate over residues 377–392; that stretch reads EVQKKVAEQTFIKDDY. Ser-398 is modified (phosphoserine). Position 409 is a phosphothreonine (Thr-409). The span at 436–455 shows a compositional bias: low complexity; sequence ASGASSPARPATPLVPCSST. A compositionally biased stretch (pro residues) spans 456-474; that stretch reads TPPPPPPRPPSRPKLPPGK. Composition is skewed to low complexity over residues 481–491 and 498–521; these read SRPFSPPIHSS and PLAR…TTPT. A Phosphoserine modification is found at Ser-485. One can recognise an MHD domain in the interval 558–826; the sequence is TLPVAAAFTE…RFAAGKYLAD (269 aa). 4 interaction with DPF motifs-containing proteins regions span residues 560-566, 592-594, 666-669, and 812-817; these read PVAAAFT, SFP, TYYN, and SLIKKR. The necessary and sufficient to mediate interaction with CANX stretch occupies residues 648-827; the sequence is MPNLMTHLKK…FAAGKYLADN (180 aa).

As to quaternary structure, interacts with proteins essential or regulating the formation of functional clathrin-coated pits. Interacts with CANX. Interacts with AP2A1. Interacts with EPS15. Interacts with SH3GL3. Interacts with AMPH. Interacts with ITSN1 (via SH3 domains). Interacts with and REPS1. As to expression, specifically expressed in brain (at protein level).

It localises to the membrane. It is found in the clathrin-coated pit. May function in clathrin-mediated endocytosis. Has both a membrane binding/tubulating activity and the ability to recruit proteins essential to the formation of functional clathrin-coated pits. Has a preference for membranes enriched in phosphatidylserine and phosphoinositides and is required for the endocytosis of the transferrin receptor. May also bind tubulin. May play a role in the regulation of energy homeostasis. The chain is SH3-containing GRB2-like protein 3-interacting protein 1 (Sgip1) from Rattus norvegicus (Rat).